The chain runs to 82 residues: Defensin-like protein 7 (82 aa).

The signal sequence occupies residues 1–29 (MKSSTTSMQLIPTLFFLTILLASPEMVEG). At Gln-30 the chain carries Pyrrolidone carboxylic acid. Intrachain disulfides connect Cys-33–Cys-77, Cys-44–Cys-64, Cys-50–Cys-71, and Cys-54–Cys-73.

Belongs to the DEFL family. As to expression, expressed in stems, roots, rosette leaves and flower buds.

It localises to the secreted. The sequence is that of Defensin-like protein 7 (LCR75) from Arabidopsis thaliana (Mouse-ear cress).